The following is a 451-amino-acid chain: UDP-N-acetylmuramate--L-alanine ligase (451 aa).

An ATP-binding site is contributed by 110–116 (GTHGKTT).

The protein belongs to the MurCDEF family.

It is found in the cytoplasm. The catalysed reaction is UDP-N-acetyl-alpha-D-muramate + L-alanine + ATP = UDP-N-acetyl-alpha-D-muramoyl-L-alanine + ADP + phosphate + H(+). It functions in the pathway cell wall biogenesis; peptidoglycan biosynthesis. Functionally, cell wall formation. The protein is UDP-N-acetylmuramate--L-alanine ligase of Francisella tularensis subsp. tularensis (strain WY96-3418).